The following is a 90-amino-acid chain: Probable Fe(2+)-trafficking protein (90 aa).

This sequence belongs to the Fe(2+)-trafficking protein family.

Functionally, could be a mediator in iron transactions between iron acquisition and iron-requiring processes, such as synthesis and/or repair of Fe-S clusters in biosynthetic enzymes. The protein is Probable Fe(2+)-trafficking protein of Leptothrix cholodnii (strain ATCC 51168 / LMG 8142 / SP-6) (Leptothrix discophora (strain SP-6)).